A 622-amino-acid polypeptide reads, in one-letter code: MVCTRKTKTLVSTCVILSGMTNIICLLYVGWVTNYIASVYVRGQEPVPDKKLEEDKGDTLKIIERLDHLENVIKQHIQEAPAKPEEAEAEPFTDSSLFAHWGQELSPEGRRVALKQFQYYGYNAYLSDRLPLDRPLPDLRPSGCRNLSFPDSLPEVSIVFIFVNEALSVLLRSIHSAMERTPSHLLKEIILVDDNSSNEELKEKLTEYVDKVNGQKPGFIKVVRHSKQEGLIRSRVSGWRAATAPVVALFDAHVEFNVGWAEPVLTRIKENRKRIISPSFDNIKYDNFEIEEYPLAAQGFDWELWCRYLNPPKAWWKLENSTAPIRSPALIGCFIVDRQYFEEIGLLDEGMEVYGGENVELGIRVSEISHTGLSSAPMMVWQCGGSVEVLPCSRIAHIERAHKPYTEDLTAHVRRNALRVAEVWMDEFKSHVYMAWNIPQEDSGIDIGDITARKALRKQLQCKTFRWYLVSVYPEMRMYSDIIAYGVLQNSLKTDLCLDQGPDTENVPIVYICHGMTPQNVYYTSSQQIHVGILSPTVDDDDNRCLVDVNSRPRLIECSYAKAKRMKLHWQFSQGGSIQNRKSKRCLELQENSDMEFGFQLVLQKCSGQHWTITNVLRSLVS.

Topologically, residues 1-12 (MVCTRKTKTLVS) are cytoplasmic. The chain crosses the membrane as a helical; Signal-anchor for type II membrane protein span at residues 13–35 (TCVILSGMTNIICLLYVGWVTNY). Residues 36-622 (IASVYVRGQE…ITNVLRSLVS (587 aa)) are Lumenal-facing. 5 cysteine pairs are disulfide-bonded: cysteine 144/cysteine 392, cysteine 383/cysteine 462, cysteine 497/cysteine 513, cysteine 545/cysteine 558, and cysteine 586/cysteine 606. Asparagine 146 carries N-linked (GlcNAc...) asparagine glycosylation. The interval 153–267 (LPEVSIVFIF…VGWAEPVLTR (115 aa)) is catalytic subdomain A. A substrate-binding site is contributed by aspartate 194. The N-linked (GlcNAc...) asparagine glycan is linked to asparagine 195. Aspartate 251 and histidine 253 together coordinate Mn(2+). The N-linked (GlcNAc...) asparagine glycan is linked to asparagine 320. The segment at 324-400 (PIRSPALIGC…PCSRIAHIER (77 aa)) is catalytic subdomain B. A Mn(2+)-binding site is contributed by histidine 397. Residues arginine 400 and tyrosine 405 each contribute to the substrate site. A Ricin B-type lectin domain is found at 484 to 614 (AYGVLQNSLK…KCSGQHWTIT (131 aa)).

Belongs to the glycosyltransferase 2 family. GalNAc-T subfamily. It depends on Mn(2+) as a cofactor.

Its subcellular location is the golgi apparatus membrane. It catalyses the reaction L-seryl-[protein] + UDP-N-acetyl-alpha-D-galactosamine = a 3-O-[N-acetyl-alpha-D-galactosaminyl]-L-seryl-[protein] + UDP + H(+). The enzyme catalyses L-threonyl-[protein] + UDP-N-acetyl-alpha-D-galactosamine = a 3-O-[N-acetyl-alpha-D-galactosaminyl]-L-threonyl-[protein] + UDP + H(+). It functions in the pathway protein modification; protein glycosylation. Functionally, catalyzes the initial reaction in O-linked oligosaccharide biosynthesis, the transfer of an N-acetyl-D-galactosamine (GalNAc) residue from UDP-GalNAc to a serine or threonine residue on the protein receptor. In Mus musculus (Mouse), this protein is Polypeptide N-acetylgalactosaminyltransferase 18 (Galnt18).